A 76-amino-acid polypeptide reads, in one-letter code: ATP synthase subunit c (76 aa).

2 consecutive transmembrane segments (helical) span residues 13–33 (LSVI…GILF) and 55–75 (FIGL…ALII).

The protein belongs to the ATPase C chain family. In terms of assembly, F-type ATPases have 2 components, F(1) - the catalytic core - and F(0) - the membrane proton channel. F(1) has five subunits: alpha(3), beta(3), gamma(1), delta(1), epsilon(1). F(0) has three main subunits: a(1), b(2) and c(10-14). The alpha and beta chains form an alternating ring which encloses part of the gamma chain. F(1) is attached to F(0) by a central stalk formed by the gamma and epsilon chains, while a peripheral stalk is formed by the delta and b chains.

It localises to the cell membrane. In terms of biological role, f(1)F(0) ATP synthase produces ATP from ADP in the presence of a proton or sodium gradient. F-type ATPases consist of two structural domains, F(1) containing the extramembraneous catalytic core and F(0) containing the membrane proton channel, linked together by a central stalk and a peripheral stalk. During catalysis, ATP synthesis in the catalytic domain of F(1) is coupled via a rotary mechanism of the central stalk subunits to proton translocation. Its function is as follows. Key component of the F(0) channel; it plays a direct role in translocation across the membrane. A homomeric c-ring of between 10-14 subunits forms the central stalk rotor element with the F(1) delta and epsilon subunits. The protein is ATP synthase subunit c of Bifidobacterium longum subsp. infantis (strain ATCC 15697 / DSM 20088 / JCM 1222 / NCTC 11817 / S12).